A 737-amino-acid polypeptide reads, in one-letter code: Zinc finger protein 585A (737 aa).

The region spanning M1–P65 is the KRAB domain. 6 consecutive C2H2-type zinc fingers follow at residues Y126 to H148, F154 to H176, Y182 to H204, H210 to H232, Y238 to H260, and Y266 to H288. The C2H2-type 7; degenerate zinc-finger motif lies at Y294–Q316. 15 C2H2-type zinc fingers span residues S322–H344, Y350–H372, Y378–H400, Y406–H428, Y434–H456, Y462–H484, Y490–H512, Y518–H540, Y546–H568, Y574–H596, Y602–H624, Y630–H652, Y658–H680, Y686–H708, and Y714–H736.

Belongs to the krueppel C2H2-type zinc-finger protein family.

It is found in the nucleus. In terms of biological role, may be involved in transcriptional regulation. The chain is Zinc finger protein 585A (ZNF585A) from Pongo abelii (Sumatran orangutan).